The primary structure comprises 393 residues: Pyruvate dehydrogenase E1 component subunit alpha-2, mitochondrial (393 aa).

The N-terminal 28 residues, 1–28 (MALSRLSSRSNTFLKPAITALPSSIRRH), are a transit peptide targeting the mitochondrion. Pyruvate is bound by residues histidine 94, tyrosine 120, arginine 121, glycine 169, valine 171, aspartate 200, glycine 201, alanine 202, asparagine 229, and tyrosine 231. Residues tyrosine 120, arginine 121, glycine 169, valine 171, aspartate 200, glycine 201, alanine 202, and asparagine 229 each coordinate thiamine diphosphate. Aspartate 200 contacts Mg(2+). Asparagine 229 and tyrosine 231 together coordinate Mg(2+). Residue histidine 295 coordinates thiamine diphosphate.

As to quaternary structure, tetramer of 2 alpha and 2 beta subunits. Thiamine diphosphate is required as a cofactor. Mg(2+) serves as cofactor.

It localises to the mitochondrion matrix. It carries out the reaction N(6)-[(R)-lipoyl]-L-lysyl-[protein] + pyruvate + H(+) = N(6)-[(R)-S(8)-acetyldihydrolipoyl]-L-lysyl-[protein] + CO2. With respect to regulation, E1 activity is regulated by phosphorylation (inactivation) and dephosphorylation (activation) of the alpha subunit. Functionally, the pyruvate dehydrogenase complex catalyzes the overall conversion of pyruvate to acetyl-CoA and CO(2). It contains multiple copies of three enzymatic components: pyruvate dehydrogenase (E1), dihydrolipoamide acetyltransferase (E2) and lipoamide dehydrogenase (E3). The protein is Pyruvate dehydrogenase E1 component subunit alpha-2, mitochondrial (IAR4) of Arabidopsis thaliana (Mouse-ear cress).